A 389-amino-acid chain; its full sequence is Acetylornithine aminotransferase (389 aa).

Pyridoxal 5'-phosphate is bound by residues 96–97 and F123; that span reads GT. R126 is a N(2)-acetyl-L-ornithine binding site. 207-210 contributes to the pyridoxal 5'-phosphate binding site; sequence DEVQ. N6-(pyridoxal phosphate)lysine is present on K236. S264 is a binding site for N(2)-acetyl-L-ornithine. T265 contacts pyridoxal 5'-phosphate.

Belongs to the class-III pyridoxal-phosphate-dependent aminotransferase family. ArgD subfamily. Homodimer. It depends on pyridoxal 5'-phosphate as a cofactor.

It localises to the cytoplasm. It carries out the reaction N(2)-acetyl-L-ornithine + 2-oxoglutarate = N-acetyl-L-glutamate 5-semialdehyde + L-glutamate. The protein operates within amino-acid biosynthesis; L-arginine biosynthesis; N(2)-acetyl-L-ornithine from L-glutamate: step 4/4. This is Acetylornithine aminotransferase from Lactiplantibacillus plantarum (strain ATCC BAA-793 / NCIMB 8826 / WCFS1) (Lactobacillus plantarum).